Consider the following 268-residue polypeptide: Orotidine 5'-phosphate decarboxylase (268 aa).

Residues D38, 60-62 (KTH), 92-101 (DRKFADIGNT), Y218, and R236 each bind substrate. The active-site Proton donor is K94.

Belongs to the OMP decarboxylase family.

The catalysed reaction is orotidine 5'-phosphate + H(+) = UMP + CO2. The protein operates within pyrimidine metabolism; UMP biosynthesis via de novo pathway; UMP from orotate: step 2/2. This Candida tropicalis (Yeast) protein is Orotidine 5'-phosphate decarboxylase (URA3).